A 155-amino-acid chain; its full sequence is MSRRGTAEEKTAKSDPIYRNRLVNMLVNRILKHGKKSLAYQIIYRAVKKIQQKTETNPLSVLRQAIRGVTPDIAVKARRVGGSTHQVPIEIGSTQGKALAIRWLLGASRKRPGRNMAFQLSSELVDAAKGSGDAIRKKEETHRMAEANRAFAHFR.

Belongs to the universal ribosomal protein uS7 family. As to quaternary structure, part of the 30S ribosomal subunit.

The protein resides in the plastid. Its subcellular location is the chloroplast. Its function is as follows. One of the primary rRNA binding proteins, it binds directly to 16S rRNA where it nucleates assembly of the head domain of the 30S subunit. This Coelogyne cristata (Orchid) protein is Small ribosomal subunit protein uS7c (rps7).